An 880-amino-acid polypeptide reads, in one-letter code: Leucine--tRNA ligase (880 aa).

The 'HIGH' region motif lies at 46 to 56 (PYPSGALHMGH). The short motif at 638–642 (KMSKS) is the 'KMSKS' region element. Residue Lys-641 participates in ATP binding.

This sequence belongs to the class-I aminoacyl-tRNA synthetase family.

The protein localises to the cytoplasm. The catalysed reaction is tRNA(Leu) + L-leucine + ATP = L-leucyl-tRNA(Leu) + AMP + diphosphate. This chain is Leucine--tRNA ligase, found in Stenotrophomonas maltophilia (strain R551-3).